We begin with the raw amino-acid sequence, 47 residues long: PhoP/PhoQ regulator MgrB (47 aa).

The chain crosses the membrane as a helical span at residues 6 to 26 (WLVLIVVVLACLVLWAQVINI).

Belongs to the MgrB family. May form homooligomers. Probably interacts with the periplasmic domain of PhoQ.

The protein resides in the cell inner membrane. Functionally, phoP-regulated transcription is redox-sensitive, being activated when the periplasm becomes more reducing. MgrB acts between DsbA/DsbB and PhoP/PhoQ in this pathway. Represses PhoP/PhoQ signaling, possibly by binding to the periplasmic domain of PhoQ, altering its activity and that of downstream effector PhoP. This is PhoP/PhoQ regulator MgrB from Escherichia fergusonii (strain ATCC 35469 / DSM 13698 / CCUG 18766 / IAM 14443 / JCM 21226 / LMG 7866 / NBRC 102419 / NCTC 12128 / CDC 0568-73).